The sequence spans 123 residues: Large ribosomal subunit protein bL12 (123 aa).

Belongs to the bacterial ribosomal protein bL12 family. In terms of assembly, homodimer. Part of the ribosomal stalk of the 50S ribosomal subunit. Forms a multimeric L10(L12)X complex, where L10 forms an elongated spine to which 2 to 4 L12 dimers bind in a sequential fashion. Binds GTP-bound translation factors.

Forms part of the ribosomal stalk which helps the ribosome interact with GTP-bound translation factors. Is thus essential for accurate translation. The polypeptide is Large ribosomal subunit protein bL12 (Rhodopseudomonas palustris (strain BisB5)).